The chain runs to 501 residues: Aldehyde dehydrogenase 1A1 (501 aa).

Ser-2 is modified (N-acetylserine). An N6-acetyllysine mark is found at Lys-91 and Lys-128. NAD(+)-binding positions include 167–170, 193–196, 226–227, and 246–247; these read IPWN, KPAE, GP, and GS. Lys-252 carries the N6-acetyllysine modification. The Proton acceptor role is filled by Glu-269. 269–271 contributes to the NAD(+) binding site; that stretch reads ELG. Cys-303 (nucleophile) is an active-site residue. Residues 336-501 are mediates interaction with PRMT3; the sequence is LTPGATQGPQ…VTVKISQKNS (166 aa). At Thr-337 the chain carries Phosphothreonine. 349-353 provides a ligand contact to NAD(+); sequence EQYDK. N6-acetyllysine occurs at positions 353 and 367. Residue 400–402 coordinates NAD(+); that stretch reads EIF. Lys-410 carries the post-translational modification N6-acetyllysine. Ser-413 carries the phosphoserine modification. Lys-419 and Lys-495 each carry N6-acetyllysine.

The protein belongs to the aldehyde dehydrogenase family. In terms of assembly, homotetramer. Interacts with PRMT3; the interaction is direct, inhibits ALDH1A1 aldehyde dehydrogenase activity and is independent of the methyltransferase activity of PRMT3. The N-terminus is blocked most probably by acetylation.

Its subcellular location is the cytoplasm. It is found in the cytosol. The protein resides in the cell projection. It localises to the axon. The catalysed reaction is an aldehyde + NAD(+) + H2O = a carboxylate + NADH + 2 H(+). It catalyses the reaction all-trans-retinal + NAD(+) + H2O = all-trans-retinoate + NADH + 2 H(+). The enzyme catalyses 9-cis-retinal + NAD(+) + H2O = 9-cis-retinoate + NADH + 2 H(+). It carries out the reaction 11-cis-retinal + NAD(+) + H2O = 11-cis-retinoate + NADH + 2 H(+). The catalysed reaction is 13-cis-retinal + NAD(+) + H2O = 13-cis-retinoate + NADH + 2 H(+). It catalyses the reaction 3-deoxyglucosone + NAD(+) + H2O = 2-dehydro-3-deoxy-D-gluconate + NADH + 2 H(+). The enzyme catalyses (E)-4-hydroxynon-2-enal + NAD(+) + H2O = (E)-4-hydroxynon-2-enoate + NADH + 2 H(+). It carries out the reaction malonaldehyde + NAD(+) + H2O = 3-oxopropanoate + NADH + 2 H(+). The catalysed reaction is hexanal + NAD(+) + H2O = hexanoate + NADH + 2 H(+). It catalyses the reaction propanal + NAD(+) + H2O = propanoate + NADH + 2 H(+). The enzyme catalyses acetaldehyde + NAD(+) + H2O = acetate + NADH + 2 H(+). It carries out the reaction benzaldehyde + NAD(+) + H2O = benzoate + NADH + 2 H(+). The catalysed reaction is 4-aminobutanal + NAD(+) + H2O = 4-aminobutanoate + NADH + 2 H(+). It functions in the pathway cofactor metabolism; retinol metabolism. Its function is as follows. Cytosolic dehydrogenase that catalyzes the irreversible oxidation of a wide range of aldehydes to their corresponding carboxylic acid. Functions downstream of retinol dehydrogenases and catalyzes the oxidation of retinaldehyde into retinoic acid, the second step in the oxidation of retinol/vitamin A into retinoic acid. This pathway is crucial to control the levels of retinol and retinoic acid, two important molecules which excess can be teratogenic and cytotoxic. Also oxidizes aldehydes resulting from lipid peroxidation like (E)-4-hydroxynon-2-enal/HNE, malonaldehyde and hexanal that form protein adducts and are highly cytotoxic. By participating for instance to the clearance of (E)-4-hydroxynon-2-enal/HNE in the lens epithelium prevents the formation of HNE-protein adducts and lens opacification. Also functions downstream of fructosamine-3-kinase in the fructosamine degradation pathway by catalyzing the oxidation of 3-deoxyglucosone, the carbohydrate product of fructosamine 3-phosphate decomposition, which is itself a potent glycating agent that may react with lysine and arginine side-chains of proteins. Also has an aminobutyraldehyde dehydrogenase activity and is probably part of an alternative pathway for the biosynthesis of GABA/4-aminobutanoate in midbrain, thereby playing a role in GABAergic synaptic transmission. The protein is Aldehyde dehydrogenase 1A1 of Macaca fascicularis (Crab-eating macaque).